A 163-amino-acid chain; its full sequence is RRM-domain-containing protein ECU01_0840 (163 aa).

Positions 84 to 163 (CSVKLSNLPL…SLGLSAEIAR (80 aa)) constitute an RRM domain.

This chain is RRM-domain-containing protein ECU01_0840, found in Encephalitozoon cuniculi (strain GB-M1) (Microsporidian parasite).